Consider the following 365-residue polypeptide: Anhydro-N-acetylmuramic acid kinase (365 aa).

9 to 16 (GTSLDGVD) serves as a coordination point for ATP.

This sequence belongs to the anhydro-N-acetylmuramic acid kinase family.

The catalysed reaction is 1,6-anhydro-N-acetyl-beta-muramate + ATP + H2O = N-acetyl-D-muramate 6-phosphate + ADP + H(+). It functions in the pathway amino-sugar metabolism; 1,6-anhydro-N-acetylmuramate degradation. It participates in cell wall biogenesis; peptidoglycan recycling. Functionally, catalyzes the specific phosphorylation of 1,6-anhydro-N-acetylmuramic acid (anhMurNAc) with the simultaneous cleavage of the 1,6-anhydro ring, generating MurNAc-6-P. Is required for the utilization of anhMurNAc either imported from the medium or derived from its own cell wall murein, and thus plays a role in cell wall recycling. In Rhodopseudomonas palustris (strain BisB18), this protein is Anhydro-N-acetylmuramic acid kinase.